The chain runs to 221 residues: Octanoyltransferase (221 aa).

Residues 35-221 (ESYENRIIFC…RELLAALLSK (187 aa)) enclose the BPL/LPL catalytic domain. Residues 80–87 (RGGDITYH), 152–154 (AIG), and 165–167 (GLA) contribute to the substrate site. The Acyl-thioester intermediate role is filled by C183.

Belongs to the LipB family.

It is found in the cytoplasm. The enzyme catalyses octanoyl-[ACP] + L-lysyl-[protein] = N(6)-octanoyl-L-lysyl-[protein] + holo-[ACP] + H(+). It participates in protein modification; protein lipoylation via endogenous pathway; protein N(6)-(lipoyl)lysine from octanoyl-[acyl-carrier-protein]: step 1/2. In terms of biological role, catalyzes the transfer of endogenously produced octanoic acid from octanoyl-acyl-carrier-protein onto the lipoyl domains of lipoate-dependent enzymes. Lipoyl-ACP can also act as a substrate although octanoyl-ACP is likely to be the physiological substrate. This is Octanoyltransferase from Bacteroides fragilis (strain ATCC 25285 / DSM 2151 / CCUG 4856 / JCM 11019 / LMG 10263 / NCTC 9343 / Onslow / VPI 2553 / EN-2).